Here is a 434-residue protein sequence, read N- to C-terminus: Histidinol dehydrogenase (434 aa).

Positions 130, 188, and 211 each coordinate NAD(+). Residues serine 237, glutamine 259, and histidine 262 each coordinate substrate. Residues glutamine 259 and histidine 262 each contribute to the Zn(2+) site. Catalysis depends on proton acceptor residues glutamate 326 and histidine 327. Substrate is bound by residues histidine 327, aspartate 360, glutamate 414, and histidine 419. Residue aspartate 360 participates in Zn(2+) binding. Zn(2+) is bound at residue histidine 419.

Belongs to the histidinol dehydrogenase family. As to quaternary structure, homodimer. The cofactor is Zn(2+).

It carries out the reaction L-histidinol + 2 NAD(+) + H2O = L-histidine + 2 NADH + 3 H(+). The protein operates within amino-acid biosynthesis; L-histidine biosynthesis; L-histidine from 5-phospho-alpha-D-ribose 1-diphosphate: step 9/9. Catalyzes the sequential NAD-dependent oxidations of L-histidinol to L-histidinaldehyde and then to L-histidine. In Escherichia coli O6:H1 (strain CFT073 / ATCC 700928 / UPEC), this protein is Histidinol dehydrogenase.